The primary structure comprises 137 residues: Nucleoside diphosphate kinase (137 aa).

6 residues coordinate ATP: lysine 9, phenylalanine 57, arginine 85, threonine 91, arginine 102, and asparagine 112. Histidine 115 serves as the catalytic Pros-phosphohistidine intermediate.

The protein belongs to the NDK family. In terms of assembly, homotetramer. Requires Mg(2+) as cofactor.

The protein resides in the cytoplasm. It carries out the reaction a 2'-deoxyribonucleoside 5'-diphosphate + ATP = a 2'-deoxyribonucleoside 5'-triphosphate + ADP. It catalyses the reaction a ribonucleoside 5'-diphosphate + ATP = a ribonucleoside 5'-triphosphate + ADP. Major role in the synthesis of nucleoside triphosphates other than ATP. The ATP gamma phosphate is transferred to the NDP beta phosphate via a ping-pong mechanism, using a phosphorylated active-site intermediate. The protein is Nucleoside diphosphate kinase of Leptospira interrogans serogroup Icterohaemorrhagiae serovar Lai (strain 56601).